The primary structure comprises 311 residues: UDP-N-acetylenolpyruvoylglucosamine reductase (311 aa).

The FAD-binding PCMH-type domain occupies 34-198; that stretch reads MGGAADLFIT…LEGTFRLQKG (165 aa). The active site involves arginine 177. The Proton donor role is filled by serine 227. Residue glutamate 297 is part of the active site.

It belongs to the MurB family. The cofactor is FAD.

The protein localises to the cytoplasm. It carries out the reaction UDP-N-acetyl-alpha-D-muramate + NADP(+) = UDP-N-acetyl-3-O-(1-carboxyvinyl)-alpha-D-glucosamine + NADPH + H(+). The protein operates within cell wall biogenesis; peptidoglycan biosynthesis. In terms of biological role, cell wall formation. The protein is UDP-N-acetylenolpyruvoylglucosamine reductase of Shouchella clausii (strain KSM-K16) (Alkalihalobacillus clausii).